The primary structure comprises 200 residues: Putative AgrB-like protein (200 aa).

5 consecutive transmembrane segments (helical) span residues 49-69 (LIITIILALLLHELVPVLVFM), 88-108 (LLCTILTAVTFVGVPYLIQFT), 114-134 (LFRFILCLLLTVPIGMFSPAV), 148-168 (ALKHKAIITSLVFSFLQFLVS), and 171-191 (LGTIIVVSLLLVFTLIVPLKG).

Belongs to the AgrB family.

The protein localises to the cell membrane. May be involved in the proteolytic processing of a quorum sensing system signal molecule precursor. The sequence is that of Putative AgrB-like protein from Lactiplantibacillus plantarum (strain ATCC BAA-793 / NCIMB 8826 / WCFS1) (Lactobacillus plantarum).